Consider the following 607-residue polypeptide: Elongation factor 4 (607 aa).

Residues 11-193 form the tr-type G domain; it reads EKIRNFSIIA…QIVEKVPAPQ (183 aa). Residues 23–28 and 140–143 each bind GTP; these read DHGKST and NKID.

It belongs to the TRAFAC class translation factor GTPase superfamily. Classic translation factor GTPase family. LepA subfamily.

The protein resides in the cell membrane. The enzyme catalyses GTP + H2O = GDP + phosphate + H(+). In terms of biological role, required for accurate and efficient protein synthesis under certain stress conditions. May act as a fidelity factor of the translation reaction, by catalyzing a one-codon backward translocation of tRNAs on improperly translocated ribosomes. Back-translocation proceeds from a post-translocation (POST) complex to a pre-translocation (PRE) complex, thus giving elongation factor G a second chance to translocate the tRNAs correctly. Binds to ribosomes in a GTP-dependent manner. In Lactococcus lactis subsp. cremoris (strain MG1363), this protein is Elongation factor 4.